The primary structure comprises 215 residues: Protein C' (215 aa).

The disordered stretch occupies residues 12-34; the sequence is MPSFLKKILKLRGRRQEDESRSR. The tract at residues 15-22 is involved in self-degradation and in host STAT1 degradation; it reads FLKKILKL.

Belongs to the respirovirus protein C family. In terms of assembly, the different isoforms interact (via C-terminus) with unphosphorylated and phosphorylated human STAT1 (via N-terminus), favoring the formation of parallel STAT1 homodimers. The different isoforms do not interact with host STAT2. C protein interacts with L protein; this interaction has an inhibitory effect on viral transcription and replication. In terms of processing, protein Y2 is produced not only by alternative initiation, but also by proteolytic cleavage of C'. Only alternative initiation is detected in vitro, whereas in vivo cleavage seems to be predominant.

The protein localises to the host cytoplasm. In terms of biological role, the different products prevent the establishment of cellular antiviral state by blocking the interferon-alpha/beta (IFN-alpha/beta) and IFN-gamma signaling pathways. They inhibit IFN-alpha/beta induced tyrosine phosphorylation of STAT1 and STAT2. Blocking the IFN-alpha/beta pathway requires binding to STAT1 in the cytoplasm. They inhibit IFN-gamma induced serine phosphorylation of STAT1. Block the IFN-gamma pathway by binding to and stabilizing the parallel form of the STAT1 dimer, further inducing high-molecular-weight complex formation and inhibition of transcription by IFN-gamma. May also have a role in preventing the cell to enter apoptosis. Modulate regulation of viral transcription and replication. Overexpression inhibits the viral RNA polymerase. The absence of all C', C and Y2 proteins leads to viral delayed growth. Plays an important role in virion particles release. Modulates virion shape. The sequence is that of Protein C' (P/V/C) from Cavia cutleri (Guinea pig).